A 76-amino-acid chain; its full sequence is DNA polymerase III subunit theta (76 aa).

As to quaternary structure, the DNA polymerase holoenzyme is a complex that contains 10 different types of subunits. These subunits are organized into 3 functionally essential subassemblies: the pol III core, the beta sliding clamp processivity factor and the clamp-loading complex. The pol III core (subunits alpha,epsilon and theta) contains the polymerase and the 3'-5' exonuclease proofreading activities. The polymerase is tethered to the template via the sliding clamp processivity factor. The clamp-loading complex assembles the beta processivity factor onto the primer template and plays a central role in the organization and communication at the replication fork. This complex contains delta, delta', psi and chi, and copies of either or both of two different DnaX proteins, gamma and tau. The composition of the holoenzyme is, therefore: (alpha,epsilon,theta)[2]-(gamma/tau)[3]-delta,delta', psi,chi-beta[4].

It catalyses the reaction DNA(n) + a 2'-deoxyribonucleoside 5'-triphosphate = DNA(n+1) + diphosphate. In terms of biological role, DNA polymerase III is a complex, multichain enzyme responsible for most of the replicative synthesis in bacteria. This DNA polymerase also exhibits 3' to 5' exonuclease activity. Functionally, the exact function of the theta subunit is unknown. The sequence is that of DNA polymerase III subunit theta (holE) from Escherichia coli O157:H7.